The sequence spans 176 residues: Large ribosomal subunit protein uL10 (176 aa).

This sequence belongs to the universal ribosomal protein uL10 family. Part of the ribosomal stalk of the 50S ribosomal subunit. The N-terminus interacts with L11 and the large rRNA to form the base of the stalk. The C-terminus forms an elongated spine to which L12 dimers bind in a sequential fashion forming a multimeric L10(L12)X complex.

Forms part of the ribosomal stalk, playing a central role in the interaction of the ribosome with GTP-bound translation factors. The polypeptide is Large ribosomal subunit protein uL10 (Coprothermobacter proteolyticus (strain ATCC 35245 / DSM 5265 / OCM 4 / BT)).